Consider the following 189-residue polypeptide: UPF0301 protein CTLon_0458 (189 aa).

This sequence belongs to the UPF0301 (AlgH) family.

The chain is UPF0301 protein CTLon_0458 from Chlamydia trachomatis serovar L2b (strain UCH-1/proctitis).